Consider the following 251-residue polypeptide: Ubiquitin-conjugating enzyme E2 22 (251 aa).

Positions 10–156 constitute a UBC core domain; the sequence is NVIKQLAKEL…ARLYTGIHAK (147 aa). Cys-94 serves as the catalytic Glycyl thioester intermediate. Over residues 230–240 the composition is skewed to basic and acidic residues; that stretch reads GLAKVQADKKK. Residues 230-251 form a disordered region; that stretch reads GLAKVQADKKKVDARKKSLKRL. Positions 230-251 form a coiled coil; it reads GLAKVQADKKKVDARKKSLKRL. The segment covering 241–251 has biased composition (basic residues); it reads VDARKKSLKRL.

It belongs to the ubiquitin-conjugating enzyme family. Self-ubiquitinated. As to expression, expressed in seeds, pistils, siliques, hypocotyls and leaves.

The catalysed reaction is S-ubiquitinyl-[E1 ubiquitin-activating enzyme]-L-cysteine + [E2 ubiquitin-conjugating enzyme]-L-cysteine = [E1 ubiquitin-activating enzyme]-L-cysteine + S-ubiquitinyl-[E2 ubiquitin-conjugating enzyme]-L-cysteine.. It functions in the pathway protein modification; protein ubiquitination. In terms of biological role, accepts the ubiquitin from the E1 complex and catalyzes its covalent attachment to other proteins. The sequence is that of Ubiquitin-conjugating enzyme E2 22 (UBC22) from Arabidopsis thaliana (Mouse-ear cress).